The primary structure comprises 576 residues: uncharacterized protein (576 aa).

A disordered region spans residues 41–78; sequence EKESESKLNSKSTTLQSSDSEDWDSEENEDDITDVGVP. Low complexity predominate over residues 49 to 58; sequence NSKSTTLQSS. The span at 59–73 shows a compositional bias: acidic residues; sequence DSEDWDSEENEDDIT. WD repeat units lie at residues 87–126, 195–235, 248–288, 296–335, and 393–433; these read GHSKIVTTTTFDKNGSRFYTGSLDNTIHCWDLNGLSATNP, GHIA…SQLE, LSRI…KRPV, LPQQGISCLSFSQDGNYLLSRGEDNALRVWDLRNSNKCVN, and TVTA…RGVK. The tract at residues 547–576 is disordered; sequence SETQPTPIYQGVTEGDISSEEGNPSKKQKR.

This is an uncharacterized protein from Schizosaccharomyces pombe (strain 972 / ATCC 24843) (Fission yeast).